Reading from the N-terminus, the 44-residue chain is Alpha-amylase inhibitor helianthamide (44 aa).

3 disulfides stabilise this stretch: cysteine 6–cysteine 38, cysteine 16–cysteine 33, and cysteine 20–cysteine 39. The tract at residues 7 to 10 is inhibitory motif; sequence YIYH.

It belongs to the sea anemone alpha-amylase inhibitor family.

Its subcellular location is the secreted. Functionally, specific pancreatic alpha-amylase (AMY2A) inhibitor. The recombinant peptide inhibits human pancreatic (Ki=0.01 nM) and porcine pancreatic alpha-amylases (Ki=0.1 nM). This is Alpha-amylase inhibitor helianthamide from Stichodactyla helianthus (Sun anemone).